A 224-amino-acid chain; its full sequence is Ribonuclease T (224 aa).

Acidic residues predominate over residues methionine 1–aspartate 11. The tract at residues methionine 1 to methionine 22 is disordered. Positions valine 32–phenylalanine 206 constitute an Exonuclease domain. The Mg(2+) site is built by aspartate 35, glutamate 37, histidine 193, and aspartate 198. Catalysis depends on histidine 193, which acts as the Proton donor/acceptor.

This sequence belongs to the RNase T family. As to quaternary structure, homodimer. Mg(2+) serves as cofactor.

Functionally, trims short 3' overhangs of a variety of RNA species, leaving a one or two nucleotide 3' overhang. Responsible for the end-turnover of tRNA: specifically removes the terminal AMP residue from uncharged tRNA (tRNA-C-C-A). Also appears to be involved in tRNA biosynthesis. This is Ribonuclease T from Pseudomonas putida (strain ATCC 700007 / DSM 6899 / JCM 31910 / BCRC 17059 / LMG 24140 / F1).